The following is a 316-amino-acid chain: Mitochondrial distribution and morphology protein 12 (316 aa).

Residues 1-312 (MSIDLEWNGL…FPNFHTLVLG (312 aa)) enclose the SMP-LTD domain.

Belongs to the MDM12 family. As to quaternary structure, component of the ER-mitochondria encounter structure (ERMES) or MDM complex, composed of MMM1, MDM10, MDM12 and MDM34. An MMM1 homodimer associates with one molecule of MDM12 on each side in a pairwise head-to-tail manner, and the SMP-LTD domains of MMM1 and MDM12 generate a continuous hydrophobic tunnel for phospholipid trafficking.

Its subcellular location is the mitochondrion outer membrane. It localises to the endoplasmic reticulum membrane. In terms of biological role, component of the ERMES/MDM complex, which serves as a molecular tether to connect the endoplasmic reticulum (ER) and mitochondria. Components of this complex are involved in the control of mitochondrial shape and protein biogenesis, and function in nonvesicular lipid trafficking between the ER and mitochondria. MDM12 is required for the interaction of the ER-resident membrane protein MMM1 and the outer mitochondrial membrane-resident beta-barrel protein MDM10. The MDM12-MMM1 subcomplex functions in the major beta-barrel assembly pathway that is responsible for biogenesis of all mitochondrial outer membrane beta-barrel proteins, and acts in a late step after the SAM complex. The MDM10-MDM12-MMM1 subcomplex further acts in the TOM40-specific pathway after the action of the MDM12-MMM1 complex. Essential for establishing and maintaining the structure of mitochondria and maintenance of mtDNA nucleoids. The chain is Mitochondrial distribution and morphology protein 12 from Postia placenta (strain ATCC 44394 / Madison 698-R) (Brown rot fungus).